A 574-amino-acid polypeptide reads, in one-letter code: Probable E3 ubiquitin-protein ligase ipaH4.5 (574 aa).

The interaction with target proteins stretch occupies residues M1–M284. LRR repeat units lie at residues R63–L82, H83–L104, T105–S122, Q123–P143, Y144–L165, T166–H183, R184–L205, K206–Q223, E224–P246, and I247–T270. The segment at S285–L292 is linker. Residues H293–A574 form an E3 ubiquitin-protein ligase catalytic domain region. The NEL domain maps to P295–A574. Catalysis depends on C379, which acts as the Glycyl thioester intermediate.

This sequence belongs to the LRR-containing bacterial E3 ligase family. Post-translationally, ubiquitinated in the presence of host E1 ubiquitin-activating enzyme, E2 ubiquitin-conjugating enzyme and ubiquitin.

The protein resides in the secreted. Its subcellular location is the host cytoplasm. It catalyses the reaction S-ubiquitinyl-[E2 ubiquitin-conjugating enzyme]-L-cysteine + [acceptor protein]-L-lysine = [E2 ubiquitin-conjugating enzyme]-L-cysteine + N(6)-ubiquitinyl-[acceptor protein]-L-lysine.. Effector proteins function to alter host cell physiology and promote bacterial survival in host tissues. This protein is an E3 ubiquitin ligase that interferes with host's ubiquitination pathway. In Shigella flexneri, this protein is Probable E3 ubiquitin-protein ligase ipaH4.5 (ipaH4.5).